The chain runs to 260 residues: Thymidylate synthase (260 aa).

It participates in pyrimidine metabolism; dTTP biosynthesis. Is able to catalyze the biosynthesis of dTMP using dUMP, tetrahydrofolate and formaldehyde in vitro, i.e. a reaction equivalent to that catalyzed by bacterial thymidylate synthases (EC 2.1.1.45). However, M.jannaschii like most methanogenic Archaea lacks folates, thus the physiological cosubstrate is unknown but is likely one of the non-methylated methanopterin biosynthetic intermediates. The chain is Thymidylate synthase from Methanocaldococcus jannaschii (strain ATCC 43067 / DSM 2661 / JAL-1 / JCM 10045 / NBRC 100440) (Methanococcus jannaschii).